The following is a 434-amino-acid chain: Bifunctional protein GlmU (434 aa).

A pyrophosphorylase region spans residues 1–226; the sequence is MNKNKISIVI…ENEYKGVNSK (226 aa). Residues 11-14, lysine 25, glutamine 77, and 84-85 each bind UDP-N-acetyl-alpha-D-glucosamine; these read LAAG and GT. A Mg(2+)-binding site is contributed by aspartate 105. Positions 138, 152, 167, and 224 each coordinate UDP-N-acetyl-alpha-D-glucosamine. Asparagine 224 contributes to the Mg(2+) binding site. Positions 227–247 are linker; it reads KDLSDAEIIMQDKIKNSLMES. Positions 248-434 are N-acetyltransferase; the sequence is GVTMQLPSTI…DFYYKFFAKK (187 aa). 2 residues coordinate UDP-N-acetyl-alpha-D-glucosamine: arginine 311 and lysine 328. The active-site Proton acceptor is histidine 339. 2 residues coordinate UDP-N-acetyl-alpha-D-glucosamine: tyrosine 342 and asparagine 353. Acetyl-CoA contacts are provided by residues alanine 356, 362-363, serine 381, and alanine 399; that span reads NY.

This sequence in the N-terminal section; belongs to the N-acetylglucosamine-1-phosphate uridyltransferase family. The protein in the C-terminal section; belongs to the transferase hexapeptide repeat family. As to quaternary structure, homotrimer. Requires Mg(2+) as cofactor.

Its subcellular location is the cytoplasm. The enzyme catalyses alpha-D-glucosamine 1-phosphate + acetyl-CoA = N-acetyl-alpha-D-glucosamine 1-phosphate + CoA + H(+). It carries out the reaction N-acetyl-alpha-D-glucosamine 1-phosphate + UTP + H(+) = UDP-N-acetyl-alpha-D-glucosamine + diphosphate. Its pathway is nucleotide-sugar biosynthesis; UDP-N-acetyl-alpha-D-glucosamine biosynthesis; N-acetyl-alpha-D-glucosamine 1-phosphate from alpha-D-glucosamine 6-phosphate (route II): step 2/2. It participates in nucleotide-sugar biosynthesis; UDP-N-acetyl-alpha-D-glucosamine biosynthesis; UDP-N-acetyl-alpha-D-glucosamine from N-acetyl-alpha-D-glucosamine 1-phosphate: step 1/1. The protein operates within bacterial outer membrane biogenesis; LPS lipid A biosynthesis. Functionally, catalyzes the last two sequential reactions in the de novo biosynthetic pathway for UDP-N-acetylglucosamine (UDP-GlcNAc). The C-terminal domain catalyzes the transfer of acetyl group from acetyl coenzyme A to glucosamine-1-phosphate (GlcN-1-P) to produce N-acetylglucosamine-1-phosphate (GlcNAc-1-P), which is converted into UDP-GlcNAc by the transfer of uridine 5-monophosphate (from uridine 5-triphosphate), a reaction catalyzed by the N-terminal domain. The chain is Bifunctional protein GlmU from Sulfurimonas denitrificans (strain ATCC 33889 / DSM 1251) (Thiomicrospira denitrificans (strain ATCC 33889 / DSM 1251)).